The primary structure comprises 499 residues: Protein-cysteine N-palmitoyltransferase HHAT (499 aa).

At 1-5 (MLPGW) the chain is on the cytoplasmic side. A helical membrane pass occupies residues 6 to 22 (ELTLCLLVSLGFHFRSF). The Lumenal portion of the chain corresponds to 23-67 (YEVYKVSREHEEELDQEFELEMDTLFGGLKKDPTDFEWNFWMEWG). Residues 68-84 (KRRLVWLFIGHMAVSQL) form a helical membrane-spanning segment. Over 85-94 (ATLLTKKHRP) the chain is Cytoplasmic. The segment at 91–155 (KHRPWIVMVY…TLRLQSVEEV (65 aa)) is essential for palmitoylation of SHH. Residues 95–119 (WIVMVYGMWACWCVLGAPGVVMVLL) lie within the membrane without spanning it. The Cytoplasmic portion of the chain corresponds to 120-131 (HSTIAFCVAQFR). The chain crosses the membrane as a helical span at residues 132–148 (SVLLSWLCSLLLLSTLR). The Lumenal portion of the chain corresponds to 149–162 (LQSVEEVKRRWYKT). A helical transmembrane segment spans residues 163–183 (ENEYYLLQFTLTVRCLYYTSF). At 184–208 (SLELCRQPPSAQPTPSAQGASHSYP) the chain is on the cytoplasmic side. A lipid anchor (S-palmitoyl cysteine) is attached at Cys-188. Residues 209-223 (WLLTYVFYYPVFHNG) lie within the membrane without spanning it. At 224–249 (PILNFPEFFRQMQQPELNSLQHSLCI) the chain is on the cytoplasmic side. A lipid anchor (S-palmitoyl cysteine) is attached at Cys-248. Residues 250–277 (VAKGLGRLLCWWWLAELMVHLMYMHALY) form a helical membrane-spanning segment. The Lumenal portion of the chain corresponds to 278–287 (SSAPLLESVS). Residues 288-316 (CWTLGGLALAQVLFFYVKYLVLFGVPALL) form a helical membrane-spanning segment. Residues 317 to 369 (MRLDGLTPPPLPRCVSTMFSFTGMWRYFDVGLHNFLIRYVYIPLGGSQHGLLG) are Cytoplasmic-facing. The S-palmitoyl cysteine moiety is linked to residue Cys-330. Residues 370–386 (TLLSTATTFAFVSYWHG) traverse the membrane as a helical segment. Residue His-385 is part of the active site. The Lumenal portion of the chain corresponds to 387–389 (SYE). Residues 390-405 (DLWCWAALNWLGVTVE) form a helical membrane-spanning segment. Over 406-433 (SGVRRLLETPCVRETLARHLSPQAHHRL) the chain is Cytoplasmic. Residue Cys-416 is the site of S-palmitoyl cysteine attachment. A helical transmembrane segment spans residues 434 to 454 (HALLAACSTSMLILFNLVFLG). Residue 454–461 (GGIQVGKT) participates in GTP binding. The Lumenal segment spans residues 455–468 (GIQVGKTYWNRIFL). The helical transmembrane segment at 469 to 487 (QGWPWVTLSVLGFLYCYSH) threads the bilayer. Residues 488 to 499 (VDIAWAQTYTVL) are Cytoplasmic-facing.

This sequence belongs to the membrane-bound acyltransferase family. HHAT subfamily.

Its subcellular location is the endoplasmic reticulum membrane. The protein resides in the golgi apparatus membrane. The enzyme catalyses N-terminal L-cysteinyl-[protein] + hexadecanoyl-CoA = N-terminal N-hexadecanoyl-L-cysteinyl-[protein] + CoA + H(+). It catalyses the reaction N-terminal L-cysteinyl-[protein]-C-terminal glycyl cholesterol ester + hexadecanoyl-CoA = N-terminal N-hexadecanoyl-L-cysteinyl-[protein]-C-terminal glycyl cholesterol ester + CoA + H(+). Functionally, palmitoyl acyltransferase that catalyzes N-terminal palmitoylation of SHH; which is required for SHH signaling during limb development. It also catalyzes N-terminal palmitoylation of DHH. Promotes the transfer of palmitoyl-CoA from the cytoplasmic to the luminal side of the endoplasmic reticulum membrane, where SHH palmitoylation occurs. Plays a role in proper testis cord formation and the differentiation of Leydig cells. This chain is Protein-cysteine N-palmitoyltransferase HHAT (Hhat), found in Mus musculus (Mouse).